Here is an 85-residue protein sequence, read N- to C-terminus: Putative membrane protein insertion efficiency factor (85 aa).

It belongs to the UPF0161 family.

It is found in the cell membrane. In terms of biological role, could be involved in insertion of integral membrane proteins into the membrane. The chain is Putative membrane protein insertion efficiency factor from Buchnera aphidicola subsp. Schizaphis graminum (strain Sg).